The following is a 110-amino-acid chain: Transmembrane protein 233 (110 aa).

A disordered region spans residues 1–32 (MSQYASRSDSKGALDSSSPEAYTEDDKTEEDI). At 1–42 (MSQYASRSDSKGALDSSSPEAYTEDDKTEEDIPAPSNYLWLT) the chain is on the cytoplasmic side. The span at 22–32 (YTEDDKTEEDI) shows a compositional bias: acidic residues. Residues 43 to 63 (IISCFCPAYPVNIVALVFSIM) constitute an intramembrane region (helical). Residues 64–85 (SLNSYNDGDYEGARRLGRNAKW) lie on the Cytoplasmic side of the membrane. Residues 86 to 106 (VAIASIIIGLVIIGVSCAVHF) form a helical membrane-spanning segment. The Extracellular portion of the chain corresponds to 107–110 (SRNP).

Belongs to the CD225/Dispanin family. Interacts with the giant stinging tree toxin ExTxA (P0DQP3). Interacts with Nav1.7/SCN9A. Interacts with Nav1.1/SCN1A, Nav1.2/SCN2A, Nav1.3/SCN3A, Nav1.4/SCN4A, Nav1.5/SCN5A, and Nav1.6/SCN8A. In terms of tissue distribution, probably expressed in nociceptive neurons. Detected in dorsal root ganglion neurons.

Its subcellular location is the membrane. Its function is as follows. Probable accessory protein of voltage-gated sodium channels. This is Transmembrane protein 233 from Mus musculus (Mouse).